A 334-amino-acid chain; its full sequence is Desumoylating isopeptidase 1 homolog (334 aa).

One can recognise a PPPDE domain in the interval 30-174 (TVVRLNVYDM…FLEKCIPQEW (145 aa)). Active-site residues include His55 and Cys133. A compositionally biased stretch (polar residues) spans 310-325 (SNIGKTNSTPGTTSNG). The tract at residues 310–334 (SNIGKTNSTPGTTSNGLAKPTCSEC) is disordered.

The protein belongs to the DeSI family. In terms of tissue distribution, expressed in the pharynx, hypodermis, intestine, head neuron and tail neuron.

The protein localises to the cytoplasm. It is found in the nucleus. Protease which deconjugates SUMO from some substrate proteins. Has isopeptidase but not SUMO-processing activity. Collaborates with ubql-1 in the export of ubiquitinated proteins from the nucleus to the cytoplasm. In Caenorhabditis elegans, this protein is Desumoylating isopeptidase 1 homolog.